Here is a 437-residue protein sequence, read N- to C-terminus: MSMFLDTAKIKVKAGKGGDGMVAFRREKYVPNGGPWGGDGGHGGNVVFVVDEGLRTLMDFRYHRRFKADDGEKGMTKGMHGRGAEDLIVRVPQGTTVRDADTGKIITDLVENGQEFVIAHGGRGGRGNIRFATPKNPAPEISENGEPGEERNLELELKVLADVGLVGFPSVGKSTLLSVITAAKPKIGAYHFTTIVPNLGMVRTKSGESFAVADLPGLIEGASQGVGLGTQFLRHIERTRVILHVLDMSASEGRDPYEDYVAINNELETYNLRLMERPQIIVANKMDMPEAEEHLEEFKKKLATNYDEFEELPQIFPISGIAHQGLENLLEATAELLEKTPEFLLYDESDFQEEEAYYGFNPDEPEFAISRADDASWILSGDKLEKLFTMTNFDRDESVMKFARQLRGMGVDEALRARGAKDGDIVRIGKFEFEFVD.

Residues 2-160 (SMFLDTAKIK…RNLELELKVL (159 aa)) form the Obg domain. One can recognise an OBG-type G domain in the interval 161-338 (ADVGLVGFPS…LLEATAELLE (178 aa)). Residues 167 to 174 (GFPSVGKS), 192 to 196 (FTTIV), 214 to 217 (DLPG), 284 to 287 (NKMD), and 319 to 321 (SGI) each bind GTP. Ser174 and Thr194 together coordinate Mg(2+). Residues 359-437 (GFNPDEPEFA…IGKFEFEFVD (79 aa)) form the OCT domain.

Belongs to the TRAFAC class OBG-HflX-like GTPase superfamily. OBG GTPase family. Monomer. It depends on Mg(2+) as a cofactor.

It is found in the cytoplasm. Its function is as follows. An essential GTPase which binds GTP, GDP and possibly (p)ppGpp with moderate affinity, with high nucleotide exchange rates and a fairly low GTP hydrolysis rate. Plays a role in control of the cell cycle, stress response, ribosome biogenesis and in those bacteria that undergo differentiation, in morphogenesis control. The sequence is that of GTPase Obg from Streptococcus suis (strain 05ZYH33).